Consider the following 253-residue polypeptide: Tryptophan synthase alpha chain (253 aa).

Catalysis depends on proton acceptor residues E46 and D57.

This sequence belongs to the TrpA family. As to quaternary structure, tetramer of two alpha and two beta chains.

It carries out the reaction (1S,2R)-1-C-(indol-3-yl)glycerol 3-phosphate + L-serine = D-glyceraldehyde 3-phosphate + L-tryptophan + H2O. It functions in the pathway amino-acid biosynthesis; L-tryptophan biosynthesis; L-tryptophan from chorismate: step 5/5. Functionally, the alpha subunit is responsible for the aldol cleavage of indoleglycerol phosphate to indole and glyceraldehyde 3-phosphate. The sequence is that of Tryptophan synthase alpha chain from Dictyoglomus turgidum (strain DSM 6724 / Z-1310).